Here is a 117-residue protein sequence, read N- to C-terminus: Large ribosomal subunit protein bL20 (117 aa).

Belongs to the bacterial ribosomal protein bL20 family.

Functionally, binds directly to 23S ribosomal RNA and is necessary for the in vitro assembly process of the 50S ribosomal subunit. It is not involved in the protein synthesizing functions of that subunit. This chain is Large ribosomal subunit protein bL20, found in Roseiflexus castenholzii (strain DSM 13941 / HLO8).